Reading from the N-terminus, the 241-residue chain is Ribose-5-phosphate isomerase A (241 aa).

Residues 29-32 (TGTT), 84-87 (DGAD), and 97-100 (KGGG) each bind substrate. Catalysis depends on glutamate 106, which acts as the Proton acceptor. Substrate is bound at residue lysine 124.

It belongs to the ribose 5-phosphate isomerase family. In terms of assembly, homodimer.

The catalysed reaction is aldehydo-D-ribose 5-phosphate = D-ribulose 5-phosphate. Its pathway is carbohydrate degradation; pentose phosphate pathway; D-ribose 5-phosphate from D-ribulose 5-phosphate (non-oxidative stage): step 1/1. In terms of biological role, catalyzes the reversible conversion of ribose-5-phosphate to ribulose 5-phosphate. In Thermoplasma acidophilum (strain ATCC 25905 / DSM 1728 / JCM 9062 / NBRC 15155 / AMRC-C165), this protein is Ribose-5-phosphate isomerase A.